The primary structure comprises 193 residues: Oocyte-secreted protein 3 (193 aa).

An N-terminal signal peptide occupies residues 1–22; that stretch reads MKDFVRLQSSFLLCTILTLSEQ. N-linked (GlcNAc...) asparagine glycans are attached at residues Asn-64, Asn-130, Asn-148, Asn-151, Asn-165, and Asn-178.

Belongs to the PLAC1 family.

It localises to the secreted. In Homo sapiens (Human), this protein is Oocyte-secreted protein 3.